The primary structure comprises 25 residues: Growth-blocking peptide (25 aa).

Cysteine 7 and cysteine 19 form a disulfide bridge. A Glutamine amide modification is found at glutamine 25.

Belongs to the GBP/PSP1/paralytic peptide family. In terms of tissue distribution, hemolymph.

Biogenic peptide that prevents, in lepidopteran, the onset of metamorphosis from larva to pupa. This growth-blocking peptide has repressive activity against juvenile hormone esterase. This Cotesia kariyai (Parasitic wasp) protein is Growth-blocking peptide.